The following is a 276-amino-acid chain: Omega-amidase NIT2-A (276 aa).

In terms of domain architecture, CN hydrolase spans 4 to 248 (FKLSLVQFLV…ETVLSAEIDL (245 aa)). Glu43 acts as the Proton acceptor in catalysis. The active-site Proton donor is the Lys112. Cys153 acts as the Nucleophile in catalysis.

The protein belongs to the carbon-nitrogen hydrolase superfamily. NIT1/NIT2 family. Homodimer.

The protein localises to the cytoplasm. The enzyme catalyses 2-oxoglutaramate + H2O = 2-oxoglutarate + NH4(+). The catalysed reaction is 2-oxosuccinamate + H2O = oxaloacetate + NH4(+). Its function is as follows. Has omega-amidase activity. The role of omega-amidase is to remove potentially toxic intermediates by converting 2-oxoglutaramate and 2-oxosuccinamate to biologically useful 2-oxoglutarate and oxaloacetate, respectively. In Xenopus laevis (African clawed frog), this protein is Omega-amidase NIT2-A (nit2a).